The primary structure comprises 166 residues: Lipoprotein signal peptidase (166 aa).

Helical transmembrane passes span 9–29 (ASGALAPWLGISLIVILFDQL), 45–65 (ALTSFFSLVLVYNRGAAFGFL), 71–91 (WQRWAFTALGIGATLVICFLL), and 100–120 (FSLSLALILGGALGNVIDRLV). Active-site residues include Asp-126 and Asp-144. A helical transmembrane segment spans residues 135–155 (WHFPAFNLADSAITIGAVLLV).

This sequence belongs to the peptidase A8 family.

Its subcellular location is the cell inner membrane. It catalyses the reaction Release of signal peptides from bacterial membrane prolipoproteins. Hydrolyzes -Xaa-Yaa-Zaa-|-(S,diacylglyceryl)Cys-, in which Xaa is hydrophobic (preferably Leu), and Yaa (Ala or Ser) and Zaa (Gly or Ala) have small, neutral side chains.. It functions in the pathway protein modification; lipoprotein biosynthesis (signal peptide cleavage). This protein specifically catalyzes the removal of signal peptides from prolipoproteins. The sequence is that of Lipoprotein signal peptidase from Burkholderia ambifaria (strain ATCC BAA-244 / DSM 16087 / CCUG 44356 / LMG 19182 / AMMD) (Burkholderia cepacia (strain AMMD)).